We begin with the raw amino-acid sequence, 520 residues long: Succinyl-CoA:3-ketoacid coenzyme A transferase 2A, mitochondrial (520 aa).

Residues Met1–Lys39 constitute a mitochondrion transit peptide. Residues Glu280–Lys299 form a disordered region. Glu342 acts as the 5-glutamyl coenzyme A thioester intermediate in catalysis.

It belongs to the 3-oxoacid CoA-transferase family. As to quaternary structure, homodimer. In terms of tissue distribution, expressed in flagella of epididymal sperm.

It localises to the mitochondrion. The enzyme catalyses a 3-oxo acid + succinyl-CoA = a 3-oxoacyl-CoA + succinate. It functions in the pathway ketone metabolism; succinyl-CoA degradation; acetoacetyl-CoA from succinyl-CoA: step 1/1. Its function is as follows. Key enzyme for ketone body catabolism. Transfers the CoA moiety from succinate to acetoacetate. Formation of the enzyme-CoA intermediate proceeds via an unstable anhydride species formed between the carboxylate groups of the enzyme and substrate. Probably play and important roles in the energy metabolism of spermatozoa. This is Succinyl-CoA:3-ketoacid coenzyme A transferase 2A, mitochondrial (Oxct2a) from Rattus norvegicus (Rat).